The chain runs to 250 residues: MPLTTKPLSLKINAALFDVDGTIIISQPAIAAFWRDFGKDKPYFDAEHVIHISHGWRTYDAIAKFAPDFADEEYVNKLEGEIPEKYGEHSIEVPGAVKLCNALNALPKEKWAVATSGTRDMAKKWFDILKIKRPEYFITANDVKQGKPHPEPYLKGRNGLGFPINEQDPSKSKVVVFEDAPAGIAAGKAAGCKIVGIATTFDLDFLKEKGCDIIVKNHESIRVGEYNAETDEVELIFDDYLYAKDDLLKW.

D18 (nucleophile) is an active-site residue. Positions 18 and 20 each coordinate Mg(2+). The active-site Proton donor is D20. A Glycyl lysine isopeptide (Lys-Gly) (interchain with G-Cter in SUMO); alternate cross-link involves residue K64. K64 is covalently cross-linked (Glycyl lysine isopeptide (Lys-Gly) (interchain with G-Cter in ubiquitin); alternate). Phosphoserine is present on S90. Residue K144 forms a Glycyl lysine isopeptide (Lys-Gly) (interchain with G-Cter in ubiquitin) linkage. D179 serves as a coordination point for Mg(2+).

The protein belongs to the HAD-like hydrolase superfamily. DOG/GPP family. As to quaternary structure, monomer. Requires Mg(2+) as cofactor.

It localises to the cytoplasm. The protein localises to the nucleus. It catalyses the reaction sn-glycerol 1-phosphate + H2O = glycerol + phosphate. The enzyme catalyses sn-glycerol 3-phosphate + H2O = glycerol + phosphate. Major isoform of glycerol-1-phosphate phosphohydrolase involved in glycerol biosynthesis. Plays a role in osmoadaptation and required for adaptation to anaerobic conditions. This Saccharomyces cerevisiae (strain ATCC 204508 / S288c) (Baker's yeast) protein is Glycerol-1-phosphate phosphohydrolase 1.